An 85-amino-acid polypeptide reads, in one-letter code: MPRPALRSRSLRRIYVKLPSGKTAIHYERKKNDISKCAMCKKPLHGVKTNFLHKYGKSEKRPERPFGGYLCSSCLAQLIKAMVRQ.

This sequence belongs to the eukaryotic ribosomal protein eL34 family.

The protein is Large ribosomal subunit protein eL34 of Saccharolobus islandicus (strain Y.N.15.51 / Yellowstone #2) (Sulfolobus islandicus).